Here is a 461-residue protein sequence, read N- to C-terminus: tRNA modification GTPase MnmE (461 aa).

3 residues coordinate (6S)-5-formyl-5,6,7,8-tetrahydrofolate: Arg-23, Glu-84, and Arg-123. A TrmE-type G domain is found at 216–383; the sequence is GARAALIGRP…LGATVARLLL (168 aa). Asn-226 is a K(+) binding site. GTP is bound by residues 226-231, 245-251, and 270-273; these read NAGKSS, TPIPGTT, and DTAG. Position 230 (Ser-230) interacts with Mg(2+). Residues Thr-245, Ile-247, and Thr-250 each contribute to the K(+) site. Thr-251 contributes to the Mg(2+) binding site. Lys-461 is a binding site for (6S)-5-formyl-5,6,7,8-tetrahydrofolate.

The protein belongs to the TRAFAC class TrmE-Era-EngA-EngB-Septin-like GTPase superfamily. TrmE GTPase family. Homodimer. Heterotetramer of two MnmE and two MnmG subunits. It depends on K(+) as a cofactor.

It is found in the cytoplasm. Its function is as follows. Exhibits a very high intrinsic GTPase hydrolysis rate. Involved in the addition of a carboxymethylaminomethyl (cmnm) group at the wobble position (U34) of certain tRNAs, forming tRNA-cmnm(5)s(2)U34. This Roseiflexus sp. (strain RS-1) protein is tRNA modification GTPase MnmE.